The chain runs to 201 residues: Recombination protein RecR (201 aa).

A C4-type zinc finger spans residues 55 to 70 (CVCCGAFCEGRTCALC). Positions 78-173 (GIICVVERAQ…IVTRLASGIP (96 aa)) constitute a Toprim domain.

It belongs to the RecR family.

Its function is as follows. May play a role in DNA repair. It seems to be involved in an RecBC-independent recombinational process of DNA repair. It may act with RecF and RecO. The protein is Recombination protein RecR of Treponema pallidum (strain Nichols).